We begin with the raw amino-acid sequence, 519 residues long: Cytochrome P450 52A12 (519 aa).

Cys467 contacts heme.

This sequence belongs to the cytochrome P450 family. Heme is required as a cofactor.

Its subcellular location is the membrane. Functionally, together with an NADPH cytochrome P450 the enzyme system catalyzes the terminal hydroxylation as the first step in the assimilation of alkanes and fatty acids. The polypeptide is Cytochrome P450 52A12 (CYP52A12) (Debaryomyces hansenii (Yeast)).